Consider the following 132-residue polypeptide: Pro-MCH 1 (132 aa).

The signal sequence occupies residues 1–24; the sequence is MRHSVLSISFAVALFLECYTPSTA. A disulfide bridge links Cys-120 with Cys-129.

The protein belongs to the melanin-concentrating hormone family. Pituitary gland. Produced in neurons of lateral basal hypothalamus which project both to the brain and to the neural lobe of the pituitary gland from where MCH is released.

Functionally, plays a role in skin pigmentation by antagonizing the action of melanotropin alpha. Induces melanin concentration within the melanophores. May participate in the control of the hypothalamo-pituitary adrenal gland axis by inhibiting the release of ACTH. The polypeptide is Pro-MCH 1 (mch1) (Oncorhynchus mykiss (Rainbow trout)).